Consider the following 88-residue polypeptide: Small ribosomal subunit protein bS20 (88 aa).

This sequence belongs to the bacterial ribosomal protein bS20 family.

Its function is as follows. Binds directly to 16S ribosomal RNA. The sequence is that of Small ribosomal subunit protein bS20 from Rhodopseudomonas palustris (strain BisA53).